We begin with the raw amino-acid sequence, 729 residues long: Fatty acid oxidation complex subunit alpha (729 aa).

The segment at 1–189 (MLYKGDTLYL…KIGLVDGVVK (189 aa)) is enoyl-CoA hydratase/isomerase. Asp296 serves as a coordination point for substrate. The segment at 311-729 (ETPKQAAVLG…ARPVGDLKTA (419 aa)) is 3-hydroxyacyl-CoA dehydrogenase. NAD(+)-binding positions include Met324, Asp343, 400–402 (VVE), Lys407, and Ser429. The active-site For 3-hydroxyacyl-CoA dehydrogenase activity is His450. Asn453 contributes to the NAD(+) binding site. 2 residues coordinate substrate: Asn500 and Tyr660. Residues 708-729 (RHNEPYYPPVEPARPVGDLKTA) are disordered.

In the N-terminal section; belongs to the enoyl-CoA hydratase/isomerase family. The protein in the C-terminal section; belongs to the 3-hydroxyacyl-CoA dehydrogenase family. As to quaternary structure, heterotetramer of two alpha chains (FadB) and two beta chains (FadA).

The enzyme catalyses a (3S)-3-hydroxyacyl-CoA + NAD(+) = a 3-oxoacyl-CoA + NADH + H(+). The catalysed reaction is a (3S)-3-hydroxyacyl-CoA = a (2E)-enoyl-CoA + H2O. It carries out the reaction a 4-saturated-(3S)-3-hydroxyacyl-CoA = a (3E)-enoyl-CoA + H2O. It catalyses the reaction (3S)-3-hydroxybutanoyl-CoA = (3R)-3-hydroxybutanoyl-CoA. The enzyme catalyses a (3Z)-enoyl-CoA = a 4-saturated (2E)-enoyl-CoA. The catalysed reaction is a (3E)-enoyl-CoA = a 4-saturated (2E)-enoyl-CoA. It participates in lipid metabolism; fatty acid beta-oxidation. In terms of biological role, involved in the aerobic and anaerobic degradation of long-chain fatty acids via beta-oxidation cycle. Catalyzes the formation of 3-oxoacyl-CoA from enoyl-CoA via L-3-hydroxyacyl-CoA. It can also use D-3-hydroxyacyl-CoA and cis-3-enoyl-CoA as substrate. The chain is Fatty acid oxidation complex subunit alpha from Escherichia coli (strain SMS-3-5 / SECEC).